Reading from the N-terminus, the 446-residue chain is Tubulin beta-1 chain (446 aa).

Residues 1–4 (MREI) carry the MREI motif motif. The GTP site is built by Q11, E69, S138, G142, T143, G144, N204, and N226. E69 provides a ligand contact to Mg(2+). Residues 426–446 (QDATAEEEGEFEEEGEYEDGA) form a disordered region. The span at 429–446 (TAEEEGEFEEEGEYEDGA) shows a compositional bias: acidic residues. E438 is subject to 5-glutamyl polyglutamate.

It belongs to the tubulin family. In terms of assembly, dimer of alpha and beta chains. A typical microtubule is a hollow water-filled tube with an outer diameter of 25 nm and an inner diameter of 15 nM. Alpha-beta heterodimers associate head-to-tail to form protofilaments running lengthwise along the microtubule wall with the beta-tubulin subunit facing the microtubule plus end conferring a structural polarity. Microtubules usually have 13 protofilaments but different protofilament numbers can be found in some organisms and specialized cells. Requires Mg(2+) as cofactor. In terms of processing, some glutamate residues at the C-terminus are polyglycylated, resulting in polyglycine chains on the gamma-carboxyl group. Glycylation is mainly limited to tubulin incorporated into axonemes (cilia and flagella) whereas glutamylation is prevalent in neuronal cells, centrioles, axonemes, and the mitotic spindle. Both modifications can coexist on the same protein on adjacent residues, and lowering polyglycylation levels increases polyglutamylation, and reciprocally. The precise function of polyglycylation is still unclear. Some glutamate residues at the C-terminus are polyglutamylated, resulting in polyglutamate chains on the gamma-carboxyl group. Polyglutamylation plays a key role in microtubule severing by spastin (SPAST). SPAST preferentially recognizes and acts on microtubules decorated with short polyglutamate tails: severing activity by SPAST increases as the number of glutamates per tubulin rises from one to eight, but decreases beyond this glutamylation threshold. In terms of tissue distribution, brain.

The protein localises to the cytoplasm. It is found in the cytoskeleton. Its function is as follows. Tubulin is the major constituent of microtubules, a cylinder consisting of laterally associated linear protofilaments composed of alpha- and beta-tubulin heterodimers. Microtubules grow by the addition of GTP-tubulin dimers to the microtubule end, where a stabilizing cap forms. Below the cap, tubulin dimers are in GDP-bound state, owing to GTPase activity of alpha-tubulin. This Notothenia neglecta (Yellowbelly rockcod) protein is Tubulin beta-1 chain (tubb1).